We begin with the raw amino-acid sequence, 815 residues long: Heme-copper oxidase subunit I+III (815 aa).

The COX1 stretch occupies residues 1–467 (MVSRLRGFLA…QLSTLGAFIF (467 aa)). Residues 26–46 (LLYLVTSIAFLLIAGSLALLF) form a helical membrane-spanning segment. H70 contacts Fe(II)-heme a. 18 consecutive transmembrane segments (helical) span residues 71–91 (GLIMLLWFASPFAFGLANYIV), 105–125 (LNALSYWLYLLSGLVLLASFF), 157–177 (LAIFLFSLSVTLGTINFLVTI), 197–217 (ILFTVILMLWAFPPLMVGGAL), 242–262 (LFWFFGHPEVYILLFPALGAM), 281–301 (LTAFLIATIISFVVWMHHMFI), 314–334 (ITTILISIPFEMAVMSFIFTL), 339–359 (LVYTVPMLFAVGALLNFIIGG), 380–400 (VVAHFHYILVGTVTLGLIAGL), 419–439 (IHFALAMLGVALTFLPQFALM), 463–483 (GAFIFGGSMAIGLVNFLYSLV), 580–600 (ALFGLFVSKPLSYLGAIVFLL), 637–657 (WVFIASEVATFGSIFSAYFFI), 683–703 (LINTIILFTGTMLFTLAYLGV), 708–728 (YLITLSGLLGTLFMAIYFLTV), 736–756 (LLIAGLGLDAGMYMQAYYVTT), 758–778 (AHALHVILGVLATTYLLVKLF), and 791–811 (VLAVGIYWGIVEIVWTLVFPL). 4 residues coordinate Cu cation: H248, Y252, H297, and H298. The 1'-histidyl-3'-tyrosine (His-Tyr) cross-link spans 248 to 252 (HPEVY). H383 provides a ligand contact to heme a3. Fe(II)-heme a is bound at residue H385. Residues 545–815 (DVSNVPLSGG…TLVFPLYYLV (271 aa)) form a COX3 region.

It in the N-terminal section; belongs to the heme-copper respiratory oxidase family. This sequence in the C-terminal section; belongs to the cytochrome c oxidase subunit 3 family. It depends on heme as a cofactor. Cu cation serves as cofactor.

Its subcellular location is the cell membrane. The chain is Heme-copper oxidase subunit I+III (aoxB) from Aeropyrum pernix (strain ATCC 700893 / DSM 11879 / JCM 9820 / NBRC 100138 / K1).